A 129-amino-acid polypeptide reads, in one-letter code: Small ribosomal subunit protein uS11 (129 aa).

The protein belongs to the universal ribosomal protein uS11 family. As to quaternary structure, part of the 30S ribosomal subunit. Interacts with proteins S7 and S18. Binds to IF-3.

Functionally, located on the platform of the 30S subunit, it bridges several disparate RNA helices of the 16S rRNA. Forms part of the Shine-Dalgarno cleft in the 70S ribosome. In Symbiobacterium thermophilum (strain DSM 24528 / JCM 14929 / IAM 14863 / T), this protein is Small ribosomal subunit protein uS11.